Reading from the N-terminus, the 76-residue chain is Demidefensin-3 (76 aa).

A signal peptide spans 1–22; sequence MRTLALHTAMLLLVALHAQAEA. Positions 23–64 are excised as a propeptide; it reads RQARADEAAAQQQPGADDQGMAHSFTWPENAALPLSESERGL. Residues 25–45 are disordered; that stretch reads ARADEAAAQQQPGADDQGMAH. The span at 30 to 44 shows a compositional bias: low complexity; sequence AAAQQQPGADDQGMA. A disulfide bridge connects residues Cys-68 and Cys-73. The propeptide occupies 74–76; that stretch reads RLL.

It belongs to the alpha-defensin family. Theta subfamily. Forms a cyclic homodimer; disulfide-linked. In terms of processing, this is a cyclic peptide.

Its function is as follows. Has antimicrobial activities against bacteria and fungi. The protein is Demidefensin-3 of Macaca mulatta (Rhesus macaque).